The sequence spans 353 residues: MLKNDLFLRALRREPCERTPIWVMRQAGRYLPEYREVRSKADFVTLCKTPELAAEVTVQPIDIIGLDAAIIFSDILVIPEAMGMGLEIIESKGPRLYEPIRSAADIDRLVVPDVADKLGYVADAIRLTKKQLDDRVPLIGFAGAAWTLFTYAVEGGGSKNYRFAKELIYNHPDQAHKLLGKISQVITDFLLLQIEVGVNAVQIFDSWASALSEDDYKTFALPYIKQSVEAVKSKHPDIPVIVFAKDANTILTDLADTGCDALGLSWNIDIARARQELNDRVALQGNLDPTVLYASPERIREEAGKILAKFGQHTEKSGHVFNLGHGILPDVNPEHLKALVDFIKEESGKYHQA.

Residues R25–R29, D74, Y151, S206, and H325 each bind substrate.

It belongs to the uroporphyrinogen decarboxylase family. In terms of assembly, homodimer.

Its subcellular location is the cytoplasm. The enzyme catalyses uroporphyrinogen III + 4 H(+) = coproporphyrinogen III + 4 CO2. The protein operates within porphyrin-containing compound metabolism; protoporphyrin-IX biosynthesis; coproporphyrinogen-III from 5-aminolevulinate: step 4/4. Functionally, catalyzes the decarboxylation of four acetate groups of uroporphyrinogen-III to yield coproporphyrinogen-III. The sequence is that of Uroporphyrinogen decarboxylase from Chloroherpeton thalassium (strain ATCC 35110 / GB-78).